A 294-amino-acid polypeptide reads, in one-letter code: ATP synthase gamma chain (294 aa).

The protein belongs to the ATPase gamma chain family. F-type ATPases have 2 components, CF(1) - the catalytic core - and CF(0) - the membrane proton channel. CF(1) has five subunits: alpha(3), beta(3), gamma(1), delta(1), epsilon(1). CF(0) has three main subunits: a, b and c.

The protein localises to the cell inner membrane. In terms of biological role, produces ATP from ADP in the presence of a proton gradient across the membrane. The gamma chain is believed to be important in regulating ATPase activity and the flow of protons through the CF(0) complex. The chain is ATP synthase gamma chain from Parvibaculum lavamentivorans (strain DS-1 / DSM 13023 / NCIMB 13966).